Reading from the N-terminus, the 284-residue chain is Ermin (284 aa).

The disordered stretch occupies residues 1–23 (MTDVPATFTQAECNGDKPPENGQ). Ser-73 is subject to Phosphoserine. Residues 110–251 (REGHQWEKIP…PTLGKKSDIS (142 aa)) form a disordered region. Basic and acidic residues-rich tracts occupy residues 126–140 (EIRR…QPLK) and 171–183 (LHSK…KVWD). The segment covering 184–200 (EEIDDDDDDNCNNDEDE) has biased composition (acidic residues). Residues 201–220 (VRVIEFKKKHEEVSQFKEEG) show a composition bias toward basic and acidic residues. Phosphoserine occurs at positions 214, 226, 230, and 233. A compositionally biased stretch (low complexity) spans 225–235 (DSPLSSASSQA). A Phosphothreonine modification is found at Thr-237. Residues 265–284 (KIRKGNTKQRIDEFESMMHL) are binds actin.

In terms of assembly, binds actin. Highly expressed in adult and fetal brain. Expressed at intermediate levels in the lung and liver.

The protein resides in the cytoplasm. It localises to the cytoskeleton. Its function is as follows. Plays a role in cytoskeletal rearrangements during the late wrapping and/or compaction phases of myelinogenesis as well as in maintenance and stability of myelin sheath in the adult. May play an important role in late-stage oligodendroglia maturation, myelin/Ranvier node formation during CNS development, and in the maintenance and plasticity of related structures in the mature CNS. The sequence is that of Ermin (ERMN) from Homo sapiens (Human).